The following is a 482-amino-acid chain: UDP-N-acetylmuramate--L-alanine ligase (482 aa).

129–135 (GTHGKTT) provides a ligand contact to ATP.

The protein belongs to the MurCDEF family.

The protein localises to the cytoplasm. The catalysed reaction is UDP-N-acetyl-alpha-D-muramate + L-alanine + ATP = UDP-N-acetyl-alpha-D-muramoyl-L-alanine + ADP + phosphate + H(+). Its pathway is cell wall biogenesis; peptidoglycan biosynthesis. In terms of biological role, cell wall formation. The polypeptide is UDP-N-acetylmuramate--L-alanine ligase (Acinetobacter baumannii (strain SDF)).